We begin with the raw amino-acid sequence, 233 residues long: Enolase-phosphatase E1 (233 aa).

Positions 6 and 8 each coordinate Mg(2+). Residues 128 to 129 (SS) and K163 contribute to the substrate site. D188 contributes to the Mg(2+) binding site.

Belongs to the HAD-like hydrolase superfamily. MasA/MtnC family. In terms of assembly, monomer. Mg(2+) serves as cofactor.

It localises to the cytoplasm. Its subcellular location is the nucleus. The enzyme catalyses 5-methylsulfanyl-2,3-dioxopentyl phosphate + H2O = 1,2-dihydroxy-5-(methylsulfanyl)pent-1-en-3-one + phosphate. The protein operates within amino-acid biosynthesis; L-methionine biosynthesis via salvage pathway; L-methionine from S-methyl-5-thio-alpha-D-ribose 1-phosphate: step 3/6. It functions in the pathway amino-acid biosynthesis; L-methionine biosynthesis via salvage pathway; L-methionine from S-methyl-5-thio-alpha-D-ribose 1-phosphate: step 4/6. Bifunctional enzyme that catalyzes the enolization of 2,3-diketo-5-methylthiopentyl-1-phosphate (DK-MTP-1-P) into the intermediate 2-hydroxy-3-keto-5-methylthiopentenyl-1-phosphate (HK-MTPenyl-1-P), which is then dephosphorylated to form the acireductone 1,2-dihydroxy-3-keto-5-methylthiopentene (DHK-MTPene). The chain is Enolase-phosphatase E1 from Yarrowia lipolytica (strain CLIB 122 / E 150) (Yeast).